Consider the following 478-residue polypeptide: 3-isopropylmalate dehydratase large subunit (478 aa).

Positions 359, 420, and 423 each coordinate [4Fe-4S] cluster.

Belongs to the aconitase/IPM isomerase family. LeuC type 1 subfamily. Heterodimer of LeuC and LeuD. It depends on [4Fe-4S] cluster as a cofactor.

The catalysed reaction is (2R,3S)-3-isopropylmalate = (2S)-2-isopropylmalate. The protein operates within amino-acid biosynthesis; L-leucine biosynthesis; L-leucine from 3-methyl-2-oxobutanoate: step 2/4. Functionally, catalyzes the isomerization between 2-isopropylmalate and 3-isopropylmalate, via the formation of 2-isopropylmaleate. This chain is 3-isopropylmalate dehydratase large subunit, found in Psychrobacter sp. (strain PRwf-1).